Here is a 423-residue protein sequence, read N- to C-terminus: Guanine nucleotide-binding protein subunit beta (423 aa).

WD repeat units lie at residues Gly90 to Asp120, Leu132 to Arg162, Gly179 to Asp208, Asp220 to Asp256, Val268 to Asp298, Asp348 to Asp377, and Gly389 to Ser419.

The protein belongs to the WD repeat G protein beta family. G proteins are composed of 3 units, alpha, beta and gamma. The beta-gamma subunit complex (STE4-STE18 complex) interacts with PLP1 and PLP2. Interacts with SYG1.

Its function is as follows. Implicated in the a- and alpha-factor response pathway. The beta and gamma chains of the putative yeast mating response pathway G protein play a positive role in initiation of the mating response. The beta and gamma chains are required for the GTPase activity, for replacement of GDP by GTP, and for G protein-effector interaction. This is Guanine nucleotide-binding protein subunit beta (STE4) from Saccharomyces cerevisiae (strain ATCC 204508 / S288c) (Baker's yeast).